We begin with the raw amino-acid sequence, 332 residues long: DNA-directed RNA polymerase subunit alpha (332 aa).

The alpha N-terminal domain (alpha-NTD) stretch occupies residues 1–234; that stretch reads MTVTISQVLR…DQLSVFGDFT (234 aa). The interval 248–332 is alpha C-terminal domain (alpha-CTD); the sequence is VDPVLLRPID…PGVSQYGMLG (85 aa).

It belongs to the RNA polymerase alpha chain family. As to quaternary structure, homodimer. The RNAP catalytic core consists of 2 alpha, 1 beta, 1 beta' and 1 omega subunit. When a sigma factor is associated with the core the holoenzyme is formed, which can initiate transcription.

The enzyme catalyses RNA(n) + a ribonucleoside 5'-triphosphate = RNA(n+1) + diphosphate. Functionally, DNA-dependent RNA polymerase catalyzes the transcription of DNA into RNA using the four ribonucleoside triphosphates as substrates. This Xylella fastidiosa (strain M12) protein is DNA-directed RNA polymerase subunit alpha.